The sequence spans 268 residues: Tetraspanin-5 (268 aa).

The Cytoplasmic segment spans residues 1 to 17; that stretch reads MSGKHYKGPEVSCCIKY. Residues 18-38 form a helical membrane-spanning segment; the sequence is FIFGFNVIFWFLGIAFLGIGL. The Extracellular segment spans residues 39–61; sequence WAWNEKGVLSNISSITDLGGFDP. Asn-49 carries N-linked (GlcNAc...) asparagine glycosylation. Residues 62 to 82 form a helical membrane-spanning segment; it reads VWLFLVVGGVMFILGFAGCIG. At 83 to 92 the chain is on the cytoplasmic side; that stretch reads ALRENTFLLK. The chain crosses the membrane as a helical span at residues 93–113; the sequence is FFSVFLGIIFFLELTAGVLAF. The Extracellular portion of the chain corresponds to 114 to 232; the sequence is VFKDWIKDQL…PQFEKWLQDN (119 aa). Intrachain disulfides connect Cys-153–Cys-221, Cys-154–Cys-186, Cys-170–Cys-180, and Cys-187–Cys-200. Residues Asn-169 and Asn-174 are each glycosylated (N-linked (GlcNAc...) asparagine). N-linked (GlcNAc...) asparagine glycosylation occurs at Asn-232. A helical membrane pass occupies residues 233–253; the sequence is LTIVAGIFIGIALLQIFGICL. The Cytoplasmic segment spans residues 254 to 268; sequence AQNLVSDIEAVRASW.

It belongs to the tetraspanin (TM4SF) family. Interacts with ADAM10; the interaction influences ADAM10 substrate specificity, endocytosis and turnover. In terms of processing, palmitoylated.

It localises to the cell membrane. Part of TspanC8 subgroup, composed of 6 members that interact with the transmembrane metalloprotease ADAM10. This interaction is required for ADAM10 exit from the endoplasmic reticulum and for enzymatic maturation and trafficking to the cell surface as well as substrate specificity. Different TspanC8/ADAM10 complexes have distinct substrates. Promotes ADAM10-mediated cleavage of CD44. Seems to regulate VE-cadherin expression in endothelial cells probably through interaction with ADAM10, promoting leukocyte transmigration. The sequence is that of Tetraspanin-5 (TSPAN5) from Bos taurus (Bovine).